Here is a 317-residue protein sequence, read N- to C-terminus: 4-hydroxy-3-methylbut-2-enyl diphosphate reductase (317 aa).

Cysteine 12 provides a ligand contact to [4Fe-4S] cluster. Residues histidine 41 and histidine 74 each coordinate (2E)-4-hydroxy-3-methylbut-2-enyl diphosphate. Dimethylallyl diphosphate is bound by residues histidine 41 and histidine 74. Residues histidine 41 and histidine 74 each contribute to the isopentenyl diphosphate site. Position 97 (cysteine 97) interacts with [4Fe-4S] cluster. Histidine 125 is a binding site for (2E)-4-hydroxy-3-methylbut-2-enyl diphosphate. Residue histidine 125 coordinates dimethylallyl diphosphate. Isopentenyl diphosphate is bound at residue histidine 125. The Proton donor role is filled by glutamate 127. Threonine 168 is a (2E)-4-hydroxy-3-methylbut-2-enyl diphosphate binding site. Cysteine 198 is a binding site for [4Fe-4S] cluster. (2E)-4-hydroxy-3-methylbut-2-enyl diphosphate contacts are provided by serine 226, serine 227, asparagine 228, and serine 270. Dimethylallyl diphosphate-binding residues include serine 226, serine 227, asparagine 228, and serine 270. Positions 226, 227, 228, and 270 each coordinate isopentenyl diphosphate.

The protein belongs to the IspH family. In terms of assembly, homodimer. It depends on [4Fe-4S] cluster as a cofactor.

The enzyme catalyses isopentenyl diphosphate + 2 oxidized [2Fe-2S]-[ferredoxin] + H2O = (2E)-4-hydroxy-3-methylbut-2-enyl diphosphate + 2 reduced [2Fe-2S]-[ferredoxin] + 2 H(+). It catalyses the reaction dimethylallyl diphosphate + 2 oxidized [2Fe-2S]-[ferredoxin] + H2O = (2E)-4-hydroxy-3-methylbut-2-enyl diphosphate + 2 reduced [2Fe-2S]-[ferredoxin] + 2 H(+). The protein operates within isoprenoid biosynthesis; dimethylallyl diphosphate biosynthesis; dimethylallyl diphosphate from (2E)-4-hydroxy-3-methylbutenyl diphosphate: step 1/1. It participates in isoprenoid biosynthesis; isopentenyl diphosphate biosynthesis via DXP pathway; isopentenyl diphosphate from 1-deoxy-D-xylulose 5-phosphate: step 6/6. Functionally, catalyzes the conversion of 1-hydroxy-2-methyl-2-(E)-butenyl 4-diphosphate (HMBPP) into a mixture of isopentenyl diphosphate (IPP) and dimethylallyl diphosphate (DMAPP). Acts in the terminal step of the DOXP/MEP pathway for isoprenoid precursor biosynthesis. This Yersinia enterocolitica serotype O:8 / biotype 1B (strain NCTC 13174 / 8081) protein is 4-hydroxy-3-methylbut-2-enyl diphosphate reductase.